The sequence spans 341 residues: Guanine nucleotide-binding protein subunit beta (341 aa).

WD repeat units lie at residues 54–84, 96–126, 142–171, 183–213, 225–255, 269–299, and 311–341; these read GHLA…IVWD, LRSS…SIYS, GHTG…ALWN, GHTG…KLFD, GHES…RLFD, NIIC…NVWD, and GHDN…KIWN.

It belongs to the WD repeat G protein beta family. As to quaternary structure, g proteins are composed of 3 units, alpha, beta and gamma.

Functionally, guanine nucleotide-binding proteins (G proteins) are involved as a modulator or transducer in various transmembrane signaling systems. The beta and gamma chains are required for the GTPase activity, for replacement of GDP by GTP, and for G protein-effector interaction. This is Guanine nucleotide-binding protein subunit beta from Loligo forbesii (Veined squid).